Reading from the N-terminus, the 334-residue chain is Galactosylgalactosylxylosylprotein 3-beta-glucuronosyltransferase 1 (334 aa).

Over 1 to 6 (MPKRRD) the chain is Cytoplasmic. Residues 3–5 (KRR) form an essential for transport from endoplasmic reticulum to Golgi apparatus and interaction with SAR1A region. The helical; Signal-anchor for type II membrane protein transmembrane segment at 7–27 (ILAIVLIVLPWTLLITVWHQS) threads the bilayer. Residues 28–334 (SLAPLLAVHK…KGFTDPSVEI (307 aa)) are Lumenal-facing. UDP-alpha-D-glucuronate is bound at residue 91–93 (PTY). Residues Thr-103 and Thr-108 each carry the phosphothreonine modification. UDP-alpha-D-glucuronate is bound at residue Asp-122. Residue Asn-140 is glycosylated (N-linked (GlcNAc...) asparagine). UDP-alpha-D-glucuronate is bound by residues Arg-165 and Arg-170. A glycan (N-linked (GlcNAc...) asparagine) is linked at Asn-184. Position 195–197 (195–197 (DDD)) interacts with UDP-alpha-D-glucuronate. Residue Asp-197 participates in Mn(2+) binding. The interaction with galactose moiety of substrate glycoprotein stretch occupies residues 245-254 (FDPHRPFAID). Residue Glu-284 is the Proton donor/acceptor of the active site. The N-linked (GlcNAc...) asparagine glycan is linked to Asn-303. 311–313 (HTR) is a UDP-alpha-D-glucuronate binding site.

The protein belongs to the glycosyltransferase 43 family. Homodimer. Interacts with SAR1A. The cofactor is Mn(2+). In terms of processing, the soluble form derives from the membrane form by proteolytic processing.

Its subcellular location is the golgi apparatus membrane. It is found in the secreted. The protein localises to the endoplasmic reticulum membrane. It catalyses the reaction 3-O-(beta-D-galactosyl-(1-&gt;3)-beta-D-galactosyl-(1-&gt;4)-beta-D-xylosyl)-L-seryl-[protein] + UDP-alpha-D-glucuronate = 3-O-(beta-D-GlcA-(1-&gt;3)-beta-D-Gal-(1-&gt;3)-beta-D-Gal-(1-&gt;4)-beta-D-Xyl)-L-seryl-[protein] + UDP + H(+). Its pathway is protein modification; protein glycosylation. In terms of biological role, involved in the biosynthesis of L2/HNK-1 carbohydrate epitope on glycoproteins. Can also play a role in glycosaminoglycan biosynthesis. Substrates include asialo-orosomucoid (ASOR), asialo-fetuin, and asialo-neural cell adhesion molecule. Requires sphingomyelin for activity: stearoyl-sphingomyelin was the most effective, followed by palmitoyl-sphingomyelin and lignoceroyl-sphingomyelin. Activity was demonstrated only for sphingomyelin with a saturated fatty acid and not for that with an unsaturated fatty acid, regardless of the length of the acyl group. The chain is Galactosylgalactosylxylosylprotein 3-beta-glucuronosyltransferase 1 from Mus musculus (Mouse).